The following is a 323-amino-acid chain: Elongation factor P--(R)-beta-lysine ligase (323 aa).

74-76 (SPE) is a binding site for substrate. Residues 98–100 (RNE) and N107 each bind ATP. Y116 contacts substrate. 242–243 (EL) contacts ATP. E249 is a substrate binding site. G298 contributes to the ATP binding site.

Belongs to the class-II aminoacyl-tRNA synthetase family. EpmA subfamily. Homodimer.

It carries out the reaction D-beta-lysine + L-lysyl-[protein] + ATP = N(6)-((3R)-3,6-diaminohexanoyl)-L-lysyl-[protein] + AMP + diphosphate + H(+). Functionally, with EpmB is involved in the beta-lysylation step of the post-translational modification of translation elongation factor P (EF-P). Catalyzes the ATP-dependent activation of (R)-beta-lysine produced by EpmB, forming a lysyl-adenylate, from which the beta-lysyl moiety is then transferred to the epsilon-amino group of a conserved specific lysine residue in EF-P. This chain is Elongation factor P--(R)-beta-lysine ligase, found in Photobacterium profundum (strain SS9).